A 498-amino-acid chain; its full sequence is DELTA-thalatoxin-Avl2a (498 aa).

An N-terminal signal peptide occupies residues Met-1–Cys-22. A propeptide spanning residues Ser-23–Asn-35 is cleaved from the precursor. Residues Ser-23–Leu-359 form the MACPF domain. Positions Ala-135–Ser-159 form a coiled coil. 3 cysteine pairs are disulfide-bonded: Cys-389-Cys-402, Cys-396-Cys-410, and Cys-412-Cys-422. The EGF-like domain occupies Cys-410–Cys-422.

The protein localises to the secreted. Its subcellular location is the nematocyst. Its function is as follows. Is lethal to mice, and may cause hemolytic activity. The protein is DELTA-thalatoxin-Avl2a of Actineria villosa (Okinawan sea anemone).